The sequence spans 224 residues: Flagellar L-ring protein (224 aa).

Residues 1 to 15 form the signal peptide; the sequence is MARYLVLAVALLLAA. A lipid anchor (N-palmitoyl cysteine) is attached at cysteine 16. Cysteine 16 carries the S-diacylglycerol cysteine lipid modification.

The protein belongs to the FlgH family. As to quaternary structure, the basal body constitutes a major portion of the flagellar organelle and consists of four rings (L,P,S, and M) mounted on a central rod.

Its subcellular location is the cell outer membrane. It is found in the bacterial flagellum basal body. In terms of biological role, assembles around the rod to form the L-ring and probably protects the motor/basal body from shearing forces during rotation. This Shewanella baltica (strain OS185) protein is Flagellar L-ring protein.